Here is a 221-residue protein sequence, read N- to C-terminus: Protein DEHYDRATION-INDUCED 19 homolog 2 (221 aa).

Disordered stretches follow at residues 1 to 24 (MEDD…TAAK) and 162 to 193 (VLPD…SDSD).

This sequence belongs to the Di19 family. Post-translationally, not phosphorylated in vitro by CPK3 or CPK11. As to expression, expressed in seedlings, roots, leaves, stems, flowers and siliques.

The protein resides in the cytoplasm. It localises to the nucleus. The sequence is that of Protein DEHYDRATION-INDUCED 19 homolog 2 (DI19-2) from Arabidopsis thaliana (Mouse-ear cress).